Here is a 478-residue protein sequence, read N- to C-terminus: MASSDLEAATALKVQGNKAFGQHEWPTAVDFYTQAIAKYDREPSFFSNRAQAHIKLEAYGFAIADATKALELDPAYTKAYWRRALANTAILNYKDALRDFKVVAKREPNNRDAKVKLADCEKLVRRMEFEKAIEVGDPPSAFEDLDIDAIAVDDSYDGVRLEKEMTQEFIDDMIERFKNGKKIHRKYAFQIVKAVKDIVYAEPTMVEIGVDQGTKLTVCGDTHGQFFDLLEIFRLNGYPSEKHAYLFNGDFVDRGSWSTEIALLLYAYKWLRPNGIFLNRGNHETDDMNKVYGFEGECKAKYNERMFKVFSESFSALPLATLIGNKYLVLHGGLFSDDNTSLDDIRKLDRHNQRQPGQQGLMMEMLWTDPQTEPGRGPSKRGVGLQFGPDVTKRFCEKNGLEAIIRSHEVRMEGYEVEHDGRCITVFSAPKYCDTTENKGAFINVGPELKLDFQVFEAVPHPDIKPMAYAQNSIMSMM.

TPR repeat units lie at residues 9-42 (ATALKVQGNKAFGQHEWPTAVDFYTQAIAKYDRE), 43-76 (PSFFSNRAQAHIKLEAYGFAIADATKALELDPAY), and 78-110 (KAYWRRALANTAILNYKDALRDFKVVAKREPNN). The interval 151–463 (AVDDSYDGVR…QVFEAVPHPD (313 aa)) is catalytic. The Mn(2+) site is built by Asp-221, His-223, Asp-250, and Asn-282. His-283 (proton donor/acceptor) is an active-site residue. The Mn(2+) site is built by His-331 and His-408.

This sequence belongs to the PPP phosphatase family. PP-5 (PP-T) subfamily. Requires Mg(2+) as cofactor. Mn(2+) serves as cofactor.

It localises to the nucleus. It catalyses the reaction O-phospho-L-seryl-[protein] + H2O = L-seryl-[protein] + phosphate. It carries out the reaction O-phospho-L-threonyl-[protein] + H2O = L-threonyl-[protein] + phosphate. Its function is as follows. Protein phosphatase that specifically binds to and dephosphorylates the molecular chaperone Hsp90. Dephosphorylation positively regulates the Hsp90 chaperone machinery. The chain is Serine/threonine-protein phosphatase T from Aspergillus oryzae (strain ATCC 42149 / RIB 40) (Yellow koji mold).